The primary structure comprises 421 residues: 3-oxoacyl-[acyl-carrier-protein] synthase 2 (421 aa).

One can recognise a Ketosynthase family 3 (KS3) domain in the interval 1–417; sequence MRRVVITGTG…GTNASLILRR (417 aa). Active-site for beta-ketoacyl synthase activity residues include cysteine 170, histidine 311, and histidine 347.

This sequence belongs to the thiolase-like superfamily. Beta-ketoacyl-ACP synthases family. As to quaternary structure, homodimer.

It catalyses the reaction a fatty acyl-[ACP] + malonyl-[ACP] + H(+) = a 3-oxoacyl-[ACP] + holo-[ACP] + CO2. The catalysed reaction is (9Z)-hexadecenoyl-[ACP] + malonyl-[ACP] + H(+) = 3-oxo-(11Z)-octadecenoyl-[ACP] + holo-[ACP] + CO2. It participates in lipid metabolism; fatty acid biosynthesis. Involved in the type II fatty acid elongation cycle. Catalyzes the elongation of a wide range of acyl-ACP by the addition of two carbons from malonyl-ACP to an acyl acceptor. Can efficiently catalyze the conversion of palmitoleoyl-ACP (cis-hexadec-9-enoyl-ACP) to cis-vaccenoyl-ACP (cis-octadec-11-enoyl-ACP), an essential step in the thermal regulation of fatty acid composition. The protein is 3-oxoacyl-[acyl-carrier-protein] synthase 2 (fabF) of Rhizobium meliloti (strain 1021) (Ensifer meliloti).